Reading from the N-terminus, the 218-residue chain is Ribonuclease T (218 aa).

In terms of domain architecture, Exonuclease spans 24-198; it reads VIIDVETAGF…YDAERTAELF (175 aa). Mg(2+)-binding residues include Asp27, Glu29, His185, and Asp190. The active-site Proton donor/acceptor is His185.

Belongs to the RNase T family. As to quaternary structure, homodimer. Requires Mg(2+) as cofactor.

Its function is as follows. Trims short 3' overhangs of a variety of RNA species, leaving a one or two nucleotide 3' overhang. Responsible for the end-turnover of tRNA: specifically removes the terminal AMP residue from uncharged tRNA (tRNA-C-C-A). Also appears to be involved in tRNA biosynthesis. This Histophilus somni (strain 129Pt) (Haemophilus somnus) protein is Ribonuclease T.